Consider the following 483-residue polypeptide: Trigger factor (483 aa).

The region spanning 162-243 (GDYVSLDLSA…VRGVKEKELP (82 aa)) is the PPIase FKBP-type domain. The interval 459 to 483 (AVAPGDGDATVEPVEPVEAETDGNG) is disordered. Residues 473–483 (EPVEAETDGNG) are compositionally biased toward acidic residues.

The protein belongs to the FKBP-type PPIase family. Tig subfamily.

It localises to the cytoplasm. The catalysed reaction is [protein]-peptidylproline (omega=180) = [protein]-peptidylproline (omega=0). Functionally, involved in protein export. Acts as a chaperone by maintaining the newly synthesized protein in an open conformation. Functions as a peptidyl-prolyl cis-trans isomerase. This chain is Trigger factor, found in Frankia casuarinae (strain DSM 45818 / CECT 9043 / HFP020203 / CcI3).